A 454-amino-acid chain; its full sequence is MEAGERRNGDSMSHNHRAPKKPRLAGLLTESDIDSEFAHHQTGVARINNGSFGCCPGSVLEAQREWQLRYLRQPDEFYFNGLRRGLLASRTVISDLINADDVDEVSLVDNATTAAAIVLQKVGRCFSEGKYKKEDTVVMFHCAFQSVKKSIQAYVSRVGGSTVEVRLPFPVNSNEEIISKFREGLEKGRANGRTVRLAIIDHITSMPCVLMPVRELVKICREEGVEQVFVDAAHAIGSVKVDVKEIGADYYVSNLHKWFFCPPSIAFFYCKKRGSESDVHHPVVSHEFGNGLPIESAWIGTRDYSSQLVVPSVMEFVNRFEGGMEGIMMKNHDEAVRMGLMLADAWGTNLGSPPEMCVGMVMIGLPSKLCVGSDEDAIKLRSYLRVHYSVEVPVFYLGLRDGEEGVKDKDSGLITAYVRISHQVYNKTEDYERLRDAITELVKDQMTCQNLPAL.

Positions 1-25 (MEAGERRNGDSMSHNHRAPKKPRLA) are disordered. Positions 14–23 (HNHRAPKKPR) are enriched in basic residues. N6-(pyridoxal phosphate)lysine is present on Lys-257.

It belongs to the class-V pyridoxal-phosphate-dependent aminotransferase family. Requires pyridoxal 5'-phosphate as cofactor. Highly expressed in stems and cauline leaves, and at lower levels in roots, rosette leaves and flowers.

The enzyme catalyses L-cysteine + H2O = hydrogen sulfide + pyruvate + NH4(+) + H(+). In terms of biological role, catalyzes the production of hydrogen sulfide (H2S) from cysteine. Is mainly responsible for the degradation of cysteine to generate H2S, a regulator of stomatal movement and closure. In Arabidopsis thaliana (Mouse-ear cress), this protein is L-cysteine desulfhydrase (LCD).